We begin with the raw amino-acid sequence, 329 residues long: MRSLQAPVVCPSVRPRQLGVSALLVNCSVSKTRSLRKQFWGNQTKNDKSQAATVNLRLHLRRYKSIKCLFSSHSDGTGSTAENFNENDEDYVKSSVLEAVEVKSGPDGFMVKMKDGRQLRCVHNNPQGGNLPNYAPHSAIVLKMEDGTGLLLPIIVLEMPSVLLMAAMTNVQIARPTMYQVVKDMVDKMGYEVRLVRVTTRVHEAYFAELYLSKVGDKSDCVSFDLRPSDAINIAVRCKVPIQVNKYLAYSDGMRVIDSGKLSKQTPASDGLLFTELDRPNGQPCFDTKEFDLVRNMMQAVDEERYDEAAEWRDKLGKFQAKRKLRKYT.

The BFN domain occupies 121–256; sequence CVHNNPQGGN…YLAYSDGMRV (136 aa). The UVR domain maps to 287-322; sequence DTKEFDLVRNMMQAVDEERYDEAAEWRDKLGKFQAK.

This sequence belongs to the bifunctional nuclease family.

It localises to the nucleus. Bifunctional nuclease with both RNase and DNase activities. Involved in basal defense response. Participates in abscisic acid-derived callose deposition following infection by a necrotrophic pathogen. This is Bifunctional nuclease 2 (BBD2) from Arabidopsis thaliana (Mouse-ear cress).